The chain runs to 596 residues: Alkaline phosphatase 4 (596 aa).

An N-terminal signal peptide occupies residues 1 to 20; that stretch reads MHCLVILGFLLGSLVAFSWA. Residue Asp-93 coordinates Mg(2+). Position 93 (Asp-93) interacts with Zn(2+). Ser-144 (phosphoserine intermediate) is an active-site residue. The Mg(2+) site is built by His-202 and Thr-204. Residues Asn-262 and Asn-297 are each glycosylated (N-linked (GlcNAc...) asparagine). Glu-369 is a binding site for Mg(2+). Residues Asp-374 and His-378 each coordinate Zn(2+). Asn-401 carries an N-linked (GlcNAc...) asparagine glycan. The Zn(2+) site is built by Asp-415 and His-416. Residues Asn-464 and Asn-470 are each glycosylated (N-linked (GlcNAc...) asparagine). His-504 lines the Zn(2+) pocket. A disulfide bridge connects residues Cys-539 and Cys-550. Over residues 548 to 566 the composition is skewed to basic and acidic residues; the sequence is DSCEDHKDGQKDRPLDKPN. Residues 548-570 form a disordered region; it reads DSCEDHKDGQKDRPLDKPNPKRN. Residue Asn-570 is the site of GPI-anchor amidated asparagine attachment. Residues 571–591 form a helical membrane-spanning segment; the sequence is GATVVGASLIPILTAATAAIL. The propeptide at 571–596 is removed in mature form; the sequence is GATVVGASLIPILTAATAAILRGRGL.

It belongs to the alkaline phosphatase family. As to quaternary structure, homodimer. The cofactor is Mg(2+). Zn(2+) serves as cofactor. In terms of tissue distribution, ellipsoid body ring neurons in the adult brain and in the lower Malpighian tubule and ureter.

The protein localises to the cell membrane. The enzyme catalyses a phosphate monoester + H2O = an alcohol + phosphate. Important role in neural and renal epithelial function. This is Alkaline phosphatase 4 from Drosophila melanogaster (Fruit fly).